We begin with the raw amino-acid sequence, 116 residues long: SGSCSLKTCWLQLADFRKVGDALKEKYDSAAAMKLNPRGKLVQVNSRFNAPTIHDLVYIDPSPDYCVRNESTGSLGTQGRLCNKTSEGMDGCELMCCGRGYDQFKTVQTERCHCKF.

S1 carries O-palmitoleoyl serine; by PORCN lipidation. N-linked (GlcNAc...) asparagine glycans are attached at residues N69 and N83. C82 and C97 are joined by a disulfide.

This sequence belongs to the Wnt family. In terms of processing, palmitoleoylation is required for efficient binding to frizzled receptors. Depalmitoleoylation leads to Wnt signaling pathway inhibition.

It localises to the secreted. The protein resides in the extracellular space. Its subcellular location is the extracellular matrix. Its function is as follows. Ligand for members of the frizzled family of seven transmembrane receptors. Can activate or inhibit canonical Wnt signaling, depending on receptor context. Required during embryogenesis for extension of the primary anterior-posterior axis. In Plestiodon skiltonianus (Western skink), this protein is Protein Wnt-5a (WNT-5A).